Here is a 233-residue protein sequence, read N- to C-terminus: H-2 class II histocompatibility antigen, A-R alpha chain (233 aa).

Positions 1–88 are alpha-1; sequence EDDIEADHVG…KRSNFTPAAN (88 aa). The Extracellular segment spans residues 1-195; it reads EDDIEADHVG…IPAPMSELTE (195 aa). The alpha-2 stretch occupies residues 89-182; it reads EAPQATVFPK…GLEEPVLKHW (94 aa). Positions 91–183 constitute an Ig-like C1-type domain; it reads PQATVFPKSP…LEEPVLKHWE (93 aa). The cysteines at positions 111 and 167 are disulfide-linked. N-linked (GlcNAc...) asparagine glycosylation is present at Asn-122. The interval 183–195 is connecting peptide; sequence EPEIPAPMSELTE. Residues 196–221 traverse the membrane as a helical segment; that stretch reads TVVCALGLSVGLVGIVVGTIFIIQGL. Topologically, residues 222 to 233 are cytoplasmic; that stretch reads RSGGTSRHPGPL.

This sequence belongs to the MHC class II family.

It is found in the membrane. This Mus musculus (Mouse) protein is H-2 class II histocompatibility antigen, A-R alpha chain (H2-Aa).